A 131-amino-acid chain; its full sequence is Arsenate reductase (131 aa).

Active-site nucleophile residues include Cys10, Cys82, and Cys89. Cystine bridges form between Cys10-Cys82 and Cys82-Cys89.

The protein belongs to the low molecular weight phosphotyrosine protein phosphatase family. Thioredoxin-coupled ArsC subfamily.

Its subcellular location is the cytoplasm. The enzyme catalyses arsenate + [thioredoxin]-dithiol + H(+) = arsenite + [thioredoxin]-disulfide + H2O. Catalyzes the reduction of arsenate [As(V)] to arsenite [As(III)]. The sequence is that of Arsenate reductase from Staphylococcus aureus (strain bovine RF122 / ET3-1).